The following is a 298-amino-acid chain: Protoheme IX farnesyltransferase (298 aa).

Helical transmembrane passes span valine 26–valine 46, isoleucine 52–valine 72, phenylalanine 99–proline 119, leucine 120–leucine 140, isoleucine 148–glycine 168, alanine 174–leucine 194, leucine 219–glutamine 239, serine 241–valine 261, and phenylalanine 276–isoleucine 296.

The protein belongs to the UbiA prenyltransferase family. Protoheme IX farnesyltransferase subfamily.

The protein localises to the cell inner membrane. The catalysed reaction is heme b + (2E,6E)-farnesyl diphosphate + H2O = Fe(II)-heme o + diphosphate. Its pathway is porphyrin-containing compound metabolism; heme O biosynthesis; heme O from protoheme: step 1/1. In terms of biological role, converts heme B (protoheme IX) to heme O by substitution of the vinyl group on carbon 2 of heme B porphyrin ring with a hydroxyethyl farnesyl side group. This is Protoheme IX farnesyltransferase from Nitrosospira multiformis (strain ATCC 25196 / NCIMB 11849 / C 71).